We begin with the raw amino-acid sequence, 102 residues long: Large ribosomal subunit protein uL23 (102 aa).

The protein belongs to the universal ribosomal protein uL23 family. In terms of assembly, part of the 50S ribosomal subunit. Contacts protein L29, and trigger factor when it is bound to the ribosome.

Functionally, one of the early assembly proteins it binds 23S rRNA. One of the proteins that surrounds the polypeptide exit tunnel on the outside of the ribosome. Forms the main docking site for trigger factor binding to the ribosome. The chain is Large ribosomal subunit protein uL23 from Methylobacillus flagellatus (strain ATCC 51484 / DSM 6875 / VKM B-1610 / KT).